The primary structure comprises 476 residues: PRAME family member 5 (476 aa).

One copy of the LRR 1; degenerate repeat lies at 97–124 (RWKLQVLDLQDVCENFWMVWSEAMAHGC). Residues 179–203 (HLCCKKLKILGMPFRNIRSILKMVN) form an LRR 2; degenerate repeat. The stretch at 204 to 230 (LDCIQEVEVNCKWVLPILTQFTPYLGH) is one LRR 3; degenerate repeat. An LRR 4; degenerate repeat occupies 231 to 266 (MRNLQKLVLSHMDVSRYVSPEQKKEIVTQFTTQFLK). 5 LRR repeats span residues 267–292 (LCCL…LSCL), 293–324 (KTSL…SQLK), 325–345 (TLDL…QILL), 349–376 (AATL…ALSR), and 377–401 (CFEL…LLSH).

Belongs to the PRAME family.

The chain is PRAME family member 5 from Homo sapiens (Human).